The chain runs to 384 residues: Spermidine/putrescine import ATP-binding protein PotA (384 aa).

The 233-residue stretch at 6-238 folds into the ABC transporter domain; that stretch reads ITFNNVSKTF…PINHFVANFI (233 aa). Position 40–47 (40–47) interacts with ATP; it reads GASGSGKS.

This sequence belongs to the ABC transporter superfamily. Spermidine/putrescine importer (TC 3.A.1.11.1) family. The complex is composed of two ATP-binding proteins (PotA), two transmembrane proteins (PotB and PotC) and a solute-binding protein (PotD).

It localises to the cell membrane. The catalysed reaction is ATP + H2O + polyamine-[polyamine-binding protein]Side 1 = ADP + phosphate + polyamineSide 2 + [polyamine-binding protein]Side 1.. Part of the ABC transporter complex PotABCD involved in spermidine/putrescine import. Responsible for energy coupling to the transport system. This is Spermidine/putrescine import ATP-binding protein PotA from Streptococcus pyogenes serotype M6 (strain ATCC BAA-946 / MGAS10394).